The chain runs to 501 residues: NAD(P)H-quinone oxidoreductase chain 4, chloroplastic (501 aa).

14 helical membrane passes run 4–24 (FPWL…IPFF), 35–55 (YTLG…CYYF), 87–107 (IGLI…AWPV), 113–133 (LFYF…ASQD), 134–154 (ILLF…LLCI), 167–187 (FILY…TMGF), 211–231 (IILY…FPLH), 242–262 (HYST…YGLI), 274–294 (SIFA…AALI), 310–330 (ISHM…GLNG), 331–351 (AILQ…LAGI), 386–406 (LALP…GIVV), 416–436 (ILVT…LLSM), and 464–484 (IFIL…PNSV).

It belongs to the complex I subunit 4 family.

It is found in the plastid. Its subcellular location is the chloroplast thylakoid membrane. It carries out the reaction a plastoquinone + NADH + (n+1) H(+)(in) = a plastoquinol + NAD(+) + n H(+)(out). The enzyme catalyses a plastoquinone + NADPH + (n+1) H(+)(in) = a plastoquinol + NADP(+) + n H(+)(out). This is NAD(P)H-quinone oxidoreductase chain 4, chloroplastic from Physcomitrium patens (Spreading-leaved earth moss).